Consider the following 144-residue polypeptide: MAKKRDSPKLIKIKDAIKLINQEVSLIGIVLEQREPKQCRNNDWICTLRIIDDTYPSPGLTVNVYSRTLEQLPQIKNHDDMILFTRIKMQTFDSGKRVNAACSRWVSSFALFEGEDLILHADEDTSAVFVWDGTDAPPASILAK.

Belongs to the telombin family. In terms of tissue distribution, expressed at extremely low levels at the limit of detection.

Its subcellular location is the nucleus. The protein resides in the chromosome. It localises to the telomere. Functionally, binds specifically single-stranded telomeric DNA with weak affinity. Has probably no function in the regulation of telomere length. This is Protection of telomeres protein 1c from Arabidopsis thaliana (Mouse-ear cress).